The following is a 440-amino-acid chain: MSTPTPKVGFVSLGCPKALVDSERILTQLRMEGYEVVPTYEDADVVVVNTCGFIDSAKAESLEVIGEAIAENGKVIVTGCMGVEEHAIRDVHPSVLAVTGPQQYEQVVTAVHEVVPPKTEHNPLIDLVPPQGIKLTPRHYAYLKISEGCNHSCSFCIIPSMRGKLVSRPVGDVLSEAERLVKAGVKELLVISQDTSAYGVDLKYKTDFWNGQPVKTRMKELCEALGGMGVWVRLHYVYPYPNVDDVIPLMAAGKLLPYLDIPFQHASPKVLKAMKRPAFEDKTLARFKHWREICPELTIRSTFIVGFPGETEEDFQYLLDWLTEAQLDRVGCFQYSPVEGAPANELGLEPVPDEVKQDRWERFMAHQQAISAARLQLKVGKEIEVLIDEVDEQGAVGRSWADAPEIDGNVFVDSDALKPGDKVRVRITDADEYDLWAEPV.

The MTTase N-terminal domain maps to 6 to 116 (PKVGFVSLGC…VVTAVHEVVP (111 aa)). [4Fe-4S] cluster is bound by residues C15, C51, C80, C149, C153, and C156. Residues 135-373 (LTPRHYAYLK…MAHQQAISAA (239 aa)) form the Radical SAM core domain. In terms of domain architecture, TRAM spans 376-440 (QLKVGKEIEV…DEYDLWAEPV (65 aa)).

The protein belongs to the methylthiotransferase family. RimO subfamily. Requires [4Fe-4S] cluster as cofactor.

It is found in the cytoplasm. The catalysed reaction is L-aspartate(89)-[ribosomal protein uS12]-hydrogen + (sulfur carrier)-SH + AH2 + 2 S-adenosyl-L-methionine = 3-methylsulfanyl-L-aspartate(89)-[ribosomal protein uS12]-hydrogen + (sulfur carrier)-H + 5'-deoxyadenosine + L-methionine + A + S-adenosyl-L-homocysteine + 2 H(+). Catalyzes the methylthiolation of an aspartic acid residue of ribosomal protein uS12. This is Ribosomal protein uS12 methylthiotransferase RimO from Pseudomonas paraeruginosa (strain DSM 24068 / PA7) (Pseudomonas aeruginosa (strain PA7)).